Consider the following 357-residue polypeptide: Putative ankyrin repeat protein L42 (357 aa).

ANK repeat units follow at residues 34–63 (SCKQ…NLKF), 86–115 (EQNE…DFRM), 116–145 (NDDE…NIRA), 147–175 (NNRP…SFVS), 176–205 (KQNE…DINV), 206–235 (GKIP…SINK), 237–265 (SVDS…EVNI), 267–294 (YYAF…ITKD), and 301–331 (NTRY…DKDK).

This is Putative ankyrin repeat protein L42 from Acanthamoeba polyphaga (Amoeba).